The following is a 189-amino-acid chain: Interferon alpha-10 (189 aa).

Residues 1-23 (MALSFSLLMAVLVLSYKSICSLG) form the signal peptide. 2 disulfide bridges follow: Cys-24/Cys-122 and Cys-52/Cys-162.

It belongs to the alpha/beta interferon family.

It is found in the secreted. Functionally, produced by macrophages, IFN-alpha have antiviral activities. Interferon stimulates the production of two enzymes: a protein kinase and an oligoadenylate synthetase. In Homo sapiens (Human), this protein is Interferon alpha-10 (IFNA10).